A 443-amino-acid polypeptide reads, in one-letter code: UDP-N-acetylmuramate--L-alanine ligase (443 aa).

110–116 (GAHGKTS) is a binding site for ATP.

The protein belongs to the MurCDEF family.

The protein resides in the cytoplasm. The catalysed reaction is UDP-N-acetyl-alpha-D-muramate + L-alanine + ATP = UDP-N-acetyl-alpha-D-muramoyl-L-alanine + ADP + phosphate + H(+). Its pathway is cell wall biogenesis; peptidoglycan biosynthesis. Cell wall formation. This Streptococcus equi subsp. zooepidemicus (strain MGCS10565) protein is UDP-N-acetylmuramate--L-alanine ligase.